A 440-amino-acid chain; its full sequence is Trigger factor (440 aa).

In terms of domain architecture, PPIase FKBP-type spans 163–248 (NDTVSINFKG…INSIKEKVLP (86 aa)).

This sequence belongs to the FKBP-type PPIase family. Tig subfamily.

The protein localises to the cytoplasm. It catalyses the reaction [protein]-peptidylproline (omega=180) = [protein]-peptidylproline (omega=0). Functionally, involved in protein export. Acts as a chaperone by maintaining the newly synthesized protein in an open conformation. Functions as a peptidyl-prolyl cis-trans isomerase. The sequence is that of Trigger factor from Finegoldia magna (strain ATCC 29328 / DSM 20472 / WAL 2508) (Peptostreptococcus magnus).